Reading from the N-terminus, the 364-residue chain is Dihydroorotate dehydrogenase (quinone) (364 aa).

Residues 61 to 65 and Thr-85 each bind FMN; that span reads AGFDK. Lys-65 contributes to the substrate binding site. Substrate is bound at residue 110-114; that stretch reads NRMGF. Asn-139 and Asn-170 together coordinate FMN. Asn-170 lines the substrate pocket. Ser-173 serves as the catalytic Nucleophile. A substrate-binding site is contributed by Asn-175. The FMN site is built by Lys-214 and Ala-242. Residue 243 to 244 coordinates substrate; sequence NT. FMN is bound by residues Gly-266, Gly-295, and 316 to 317; that span reads YS.

This sequence belongs to the dihydroorotate dehydrogenase family. Type 2 subfamily. Monomer. The cofactor is FMN.

It localises to the cell membrane. The catalysed reaction is (S)-dihydroorotate + a quinone = orotate + a quinol. It participates in pyrimidine metabolism; UMP biosynthesis via de novo pathway; orotate from (S)-dihydroorotate (quinone route): step 1/1. Catalyzes the conversion of dihydroorotate to orotate with quinone as electron acceptor. This chain is Dihydroorotate dehydrogenase (quinone), found in Rhodopseudomonas palustris (strain ATCC BAA-98 / CGA009).